A 416-amino-acid polypeptide reads, in one-letter code: 3-isopropylmalate dehydratase large subunit 2 (416 aa).

[4Fe-4S] cluster is bound by residues cysteine 296, cysteine 356, and cysteine 359.

This sequence belongs to the aconitase/IPM isomerase family. LeuC type 2 subfamily. In terms of assembly, heterodimer of LeuC and LeuD. [4Fe-4S] cluster serves as cofactor.

The enzyme catalyses (2R,3S)-3-isopropylmalate = (2S)-2-isopropylmalate. The protein operates within amino-acid biosynthesis; L-leucine biosynthesis; L-leucine from 3-methyl-2-oxobutanoate: step 2/4. Its function is as follows. Catalyzes the isomerization between 2-isopropylmalate and 3-isopropylmalate, via the formation of 2-isopropylmaleate. In Archaeoglobus fulgidus (strain ATCC 49558 / DSM 4304 / JCM 9628 / NBRC 100126 / VC-16), this protein is 3-isopropylmalate dehydratase large subunit 2.